Here is a 605-residue protein sequence, read N- to C-terminus: F-box/WD repeat-containing protein pof1 (605 aa).

Positions 107–153 (LDFLSLLPVEISFRILSFLDARSLCQAAQVSKHWKELADDDVIWHRM) constitute an F-box domain. Over residues 195–212 (GVDQAHESSPVKKAKLDD) the composition is skewed to basic and acidic residues. The disordered stretch occupies residues 195-231 (GVDQAHESSPVKKAKLDDYPTSSNEETISSVKPPSPN). Positions 214 to 231 (PTSSNEETISSVKPPSPN) are enriched in polar residues. Ser229 and Ser232 each carry phosphoserine. WD repeat units follow at residues 271 to 299 (GHSDGVMCLQLVRNILASGSYDATIRLWN), 311 to 339 (GHSSGVTCLQFDQCKLISGSMDKTIRIWN), 350 to 379 (HGHTDSVLCLTFDSTLLVSGSADCTVKLWH), 390 to 420 (GHTGPVNSVRIIRDRGLVLSGSDDSTIKIWS), 432 to 460 (AHIGPVQSLALADSRLFSCSLDGTIKQWD), 472 to 500 (GHIEGVWEIAADHLRLISGAHDGVVKVWE), and 510 to 538 (NHSEPVTSVALGDCEVVSGSEDGKIYLWL).

In terms of assembly, a part of the E3 ubiquitin ligase Skp1-Cullin-1-F-box (SCF) complex. Interacts with cul1, skp1 and phosphorylated zip1.

It is found in the nucleus. Probably recognizes and binds to some phosphorylated proteins and promotes their ubiquitination and degradation. Required for the inactivation of zip1 via ubiquitination. This chain is F-box/WD repeat-containing protein pof1 (pof1), found in Schizosaccharomyces pombe (strain 972 / ATCC 24843) (Fission yeast).